The sequence spans 300 residues: Light-independent protochlorophyllide reductase iron-sulfur ATP-binding protein (300 aa).

ATP-binding positions include 10-15 (GIGKST) and K39. S14 serves as a coordination point for Mg(2+). [4Fe-4S] cluster contacts are provided by C95 and C129. 180–181 (NR) is an ATP binding site.

It belongs to the NifH/BchL/ChlL family. As to quaternary structure, homodimer. Protochlorophyllide reductase is composed of three subunits; ChlL, ChlN and ChlB. It depends on [4Fe-4S] cluster as a cofactor.

It localises to the plastid. The protein localises to the chloroplast. The enzyme catalyses chlorophyllide a + oxidized 2[4Fe-4S]-[ferredoxin] + 2 ADP + 2 phosphate = protochlorophyllide a + reduced 2[4Fe-4S]-[ferredoxin] + 2 ATP + 2 H2O. Its pathway is porphyrin-containing compound metabolism; chlorophyll biosynthesis (light-independent). In terms of biological role, component of the dark-operative protochlorophyllide reductase (DPOR) that uses Mg-ATP and reduced ferredoxin to reduce ring D of protochlorophyllide (Pchlide) to form chlorophyllide a (Chlide). This reaction is light-independent. The L component serves as a unique electron donor to the NB-component of the complex, and binds Mg-ATP. This Auxenochlorella protothecoides (Green microalga) protein is Light-independent protochlorophyllide reductase iron-sulfur ATP-binding protein.